A 223-amino-acid chain; its full sequence is MKDTLKLYFVCGTVDCSRKNILTVVEEALQAGITLFQFREKGFTALQGKEKIAMAKQLQILCKQYQVPFIIDDDIDLVELIDADGLHIGQNDLPVDEARRRLPDKIIGLSVSTMAEYQKSQLSVVDYIGIGPFNPTQSKADAKPAVGNRTTKAVREINQDIPIVAIGGITSDFVHDIIESGADGIAVISAISKANHIVDATRQLRYEVEKALVNRQKRSDVIK.

4-amino-2-methyl-5-(diphosphooxymethyl)pyrimidine is bound by residues 37 to 41 and aspartate 72; that span reads QFREK. Mg(2+) contacts are provided by aspartate 73 and aspartate 92. Position 110 (serine 110) interacts with 4-amino-2-methyl-5-(diphosphooxymethyl)pyrimidine. 136 to 138 is a 2-[(2R,5Z)-2-carboxy-4-methylthiazol-5(2H)-ylidene]ethyl phosphate binding site; it reads TQS. Position 139 (lysine 139) interacts with 4-amino-2-methyl-5-(diphosphooxymethyl)pyrimidine. Residues glycine 168 and 188–189 contribute to the 2-[(2R,5Z)-2-carboxy-4-methylthiazol-5(2H)-ylidene]ethyl phosphate site; that span reads IS.

This sequence belongs to the thiamine-phosphate synthase family. It depends on Mg(2+) as a cofactor.

The catalysed reaction is 2-[(2R,5Z)-2-carboxy-4-methylthiazol-5(2H)-ylidene]ethyl phosphate + 4-amino-2-methyl-5-(diphosphooxymethyl)pyrimidine + 2 H(+) = thiamine phosphate + CO2 + diphosphate. The enzyme catalyses 2-(2-carboxy-4-methylthiazol-5-yl)ethyl phosphate + 4-amino-2-methyl-5-(diphosphooxymethyl)pyrimidine + 2 H(+) = thiamine phosphate + CO2 + diphosphate. It catalyses the reaction 4-methyl-5-(2-phosphooxyethyl)-thiazole + 4-amino-2-methyl-5-(diphosphooxymethyl)pyrimidine + H(+) = thiamine phosphate + diphosphate. It functions in the pathway cofactor biosynthesis; thiamine diphosphate biosynthesis; thiamine phosphate from 4-amino-2-methyl-5-diphosphomethylpyrimidine and 4-methyl-5-(2-phosphoethyl)-thiazole: step 1/1. Its function is as follows. Condenses 4-methyl-5-(beta-hydroxyethyl)thiazole monophosphate (THZ-P) and 2-methyl-4-amino-5-hydroxymethyl pyrimidine pyrophosphate (HMP-PP) to form thiamine monophosphate (TMP). In Streptococcus agalactiae serotype III (strain NEM316), this protein is Thiamine-phosphate synthase.